The primary structure comprises 580 residues: N(6)-adenosine-methyltransferase catalytic subunit METTL3 (580 aa).

Residues 1–70 (MSDTWSSIQA…PKPSTTSVAP (70 aa)) form a disordered region. An N-acetylserine; alternate modification is found at serine 2. Phosphoserine; alternate is present on serine 2. The span at 28-37 (QDSGHLDLRN) shows a compositional bias: basic and acidic residues. A phosphoserine mark is found at serine 43, serine 48, and serine 50. A compositionally biased stretch (low complexity) spans 55-67 (APTSSGPKPSTTS). Glycyl lysine isopeptide (Lys-Gly) (interchain with G-Cter in SUMO1) cross-links involve residues lysine 177, lysine 211, lysine 212, and lysine 215. A disordered region spans residues 198 to 217 (LASSASEPAKEPAKKSRKHA). A Nuclear localization signal motif is present at residues 210–215 (AKKSRK). Phosphoserine occurs at positions 219, 243, and 350. Residues 377–378 (DI) and aspartate 395 each bind S-adenosyl-L-methionine. The interval 396 to 410 (PPWDIHMELPYGTLT) is gate loop 1. Interaction with METTL14 stretches follow at residues 450 to 454 (ERVDE) and 464 to 480 (QRII…NHGK). The segment at 462–479 (QLQRIIRTGRTGHWLNHG) is interphase loop. Residues 465 to 478 (RIIRTGRTGHWLNH) form a positively charged region required for RNA-binding region. Residues 507 to 515 (VRSTSHKPD) are gate loop 2. S-adenosyl-L-methionine is bound by residues lysine 513, 536–539 (RPHN), and 549–550 (NQ).

It belongs to the MT-A70-like family. As to quaternary structure, heterodimer; heterodimerizes with METTL14 to form an antiparallel heterodimer that constitutes an active methyltransferase. Component of the WMM complex, a N6-methyltransferase complex composed of a catalytic subcomplex, named MAC, and of an associated subcomplex, named MACOM. The MAC subcomplex is composed of METTL3 and METTL14. The MACOM subcomplex is composed of WTAP, ZC3H13, CBLL1/HAKAI, VIRMA, and, in some cases of RBM15 (RBM15 or RBM15B). Interacts with NCBP1/CBP80. Interacts with EIF4E. Interacts with EIF3B. Sumoylation inhibits the N6-adenosine-methyltransferase activity. Sumoylation does not affect subcellular location or interaction with METTL14. Desumoylated by SENP1. Present in both germ cells and somatic cells during testis development (at protein level).

The protein localises to the nucleus. It localises to the nucleus speckle. It is found in the cytoplasm. It carries out the reaction an adenosine in mRNA + S-adenosyl-L-methionine = an N(6)-methyladenosine in mRNA + S-adenosyl-L-homocysteine + H(+). Its activity is regulated as follows. Methyltransferase activity is regulated by miRNAs via a sequence pairing mechanism. Methyltransferase activity is inhibited by sumoylation. The METTL3-METTL14 heterodimer forms a N6-methyltransferase complex that methylates adenosine residues at the N(6) position of some RNAs and regulates various processes such as the circadian clock, differentiation of embryonic and hematopoietic stem cells, cortical neurogenesis, response to DNA damage, differentiation of T-cells and primary miRNA processing. In the heterodimer formed with METTL14, METTL3 constitutes the catalytic core. N6-methyladenosine (m6A), which takes place at the 5'-[AG]GAC-3' consensus sites of some mRNAs, plays a role in mRNA stability, processing, translation efficiency and editing. M6A acts as a key regulator of mRNA stability: methylation is completed upon the release of mRNA into the nucleoplasm and promotes mRNA destabilization and degradation. In embryonic stem cells (ESCs), m6A methylation of mRNAs encoding key naive pluripotency-promoting transcripts results in transcript destabilization, promoting differentiation of ESCs. M6A regulates the length of the circadian clock: acts as an early pace-setter in the circadian loop by putting mRNA production on a fast-track for facilitating nuclear processing, thereby providing an early point of control in setting the dynamics of the feedback loop. M6A also regulates circadian regulation of hepatic lipid metabolism. M6A regulates spermatogonial differentiation and meiosis and is essential for male fertility and spermatogenesis. Also required for oogenesis. Involved in the response to DNA damage: in response to ultraviolet irradiation, METTL3 rapidly catalyzes the formation of m6A on poly(A) transcripts at DNA damage sites, leading to the recruitment of POLK to DNA damage sites. M6A is also required for T-cell homeostasis and differentiation: m6A methylation of transcripts of SOCS family members (SOCS1, SOCS3 and CISH) in naive T-cells promotes mRNA destabilization and degradation, promoting T-cell differentiation. Inhibits the type I interferon response by mediating m6A methylation of IFNB. M6A also regulates cortical neurogenesis: m6A methylation of transcripts related to transcription factors, neural stem cells, the cell cycle and neuronal differentiation during brain development promotes their destabilization and decay, promoting differentiation of radial glial cells. M6A also takes place in other RNA molecules, such as primary miRNA (pri-miRNAs). Mediates m6A methylation of Xist RNA, thereby participating in random X inactivation: m6A methylation of Xist leads to target YTHDC1 reader on Xist and promote transcription repression activity of Xist. METTL3 mediates methylation of pri-miRNAs, marking them for recognition and processing by DGCR8. Acts as a positive regulator of mRNA translation independently of the methyltransferase activity: promotes translation by interacting with the translation initiation machinery in the cytoplasm. The polypeptide is N(6)-adenosine-methyltransferase catalytic subunit METTL3 (Mus musculus (Mouse)).